The primary structure comprises 272 residues: Putative pyruvate, phosphate dikinase regulatory protein (272 aa).

153-160 (GVSRTSKT) provides a ligand contact to ADP.

The protein belongs to the pyruvate, phosphate/water dikinase regulatory protein family. PDRP subfamily.

The enzyme catalyses N(tele)-phospho-L-histidyl/L-threonyl-[pyruvate, phosphate dikinase] + ADP = N(tele)-phospho-L-histidyl/O-phospho-L-threonyl-[pyruvate, phosphate dikinase] + AMP + H(+). The catalysed reaction is N(tele)-phospho-L-histidyl/O-phospho-L-threonyl-[pyruvate, phosphate dikinase] + phosphate + H(+) = N(tele)-phospho-L-histidyl/L-threonyl-[pyruvate, phosphate dikinase] + diphosphate. Its function is as follows. Bifunctional serine/threonine kinase and phosphorylase involved in the regulation of the pyruvate, phosphate dikinase (PPDK) by catalyzing its phosphorylation/dephosphorylation. The sequence is that of Putative pyruvate, phosphate dikinase regulatory protein from Chelativorans sp. (strain BNC1).